Here is a 325-residue protein sequence, read N- to C-terminus: Elongation factor P--(R)-beta-lysine ligase (325 aa).

76–78 serves as a coordination point for substrate; it reads SPE. Residues 100-102 and Asn-109 contribute to the ATP site; that span reads RNE. A substrate-binding site is contributed by Tyr-118. 244–245 lines the ATP pocket; it reads EL. Glu-251 provides a ligand contact to substrate. An ATP-binding site is contributed by Gly-300.

It belongs to the class-II aminoacyl-tRNA synthetase family. EpmA subfamily. As to quaternary structure, homodimer.

The enzyme catalyses D-beta-lysine + L-lysyl-[protein] + ATP = N(6)-((3R)-3,6-diaminohexanoyl)-L-lysyl-[protein] + AMP + diphosphate + H(+). With EpmB is involved in the beta-lysylation step of the post-translational modification of translation elongation factor P (EF-P). Catalyzes the ATP-dependent activation of (R)-beta-lysine produced by EpmB, forming a lysyl-adenylate, from which the beta-lysyl moiety is then transferred to the epsilon-amino group of a conserved specific lysine residue in EF-P. The sequence is that of Elongation factor P--(R)-beta-lysine ligase from Klebsiella pneumoniae (strain 342).